A 339-amino-acid chain; its full sequence is Cathepsin B (339 aa).

Positions 1–17 are cleaved as a signal peptide; it reads MWWSLILLSCLLALTSA. The propeptide at 18 to 79 is activation peptide; the sequence is HDKPSFHPLS…GRVAFGEDID (62 aa). 6 cysteine pairs are disulfide-bonded: C93–C122, C105–C150, C141–C207, C142–C146, C179–C211, and C187–C198. The active site involves C108. N-linked (GlcNAc...) asparagine glycosylation is present at N192. N6-acetyllysine is present on K220. Catalysis depends on residues H278 and N298. Positions 334 to 339 are excised as a propeptide; sequence QYWGRF.

The protein belongs to the peptidase C1 family. As to quaternary structure, dimer of a heavy chain and a light chain cross-linked by a disulfide bond. Interacts with SRPX2. Directly interacts with SHKBP1. In terms of tissue distribution, expressed in thyroid epithelial cells.

It localises to the lysosome. It is found in the melanosome. The protein localises to the secreted. Its subcellular location is the extracellular space. The protein resides in the apical cell membrane. It catalyses the reaction Hydrolysis of proteins with broad specificity for peptide bonds. Preferentially cleaves -Arg-Arg-|-Xaa bonds in small molecule substrates (thus differing from cathepsin L). In addition to being an endopeptidase, shows peptidyl-dipeptidase activity, liberating C-terminal dipeptides.. In terms of biological role, thiol protease which is believed to participate in intracellular degradation and turnover of proteins. Cleaves matrix extracellular phosphoglycoprotein MEPE. Involved in the solubilization of cross-linked TG/thyroglobulin in the thyroid follicle lumen. Has also been implicated in tumor invasion and metastasis. This Mus musculus (Mouse) protein is Cathepsin B (Ctsb).